Reading from the N-terminus, the 451-residue chain is Tubby-like F-box protein 12 (451 aa).

In terms of domain architecture, F-box spans 57 to 112 (SRWVGLPPELLRDVMKRLEEGESNWPSRKDVVACAAVCRTWREICKDIVQSPEICG). Residues 387-406 (LEQQQQQQQQNHASSSSSAS) are compositionally biased toward low complexity. Residues 387–407 (LEQQQQQQQQNHASSSSSASD) form a disordered region.

It belongs to the TUB family. As to expression, ubiquitous.

The protein is Tubby-like F-box protein 12 (TULP12) of Oryza sativa subsp. japonica (Rice).